Here is a 501-residue protein sequence, read N- to C-terminus: Glycerol kinase (501 aa).

Threonine 12 contributes to the ADP binding site. Threonine 12, threonine 13, and serine 14 together coordinate ATP. Threonine 12 lines the sn-glycerol 3-phosphate pocket. Arginine 16 is an ADP binding site. Positions 82, 83, 135, and 244 each coordinate sn-glycerol 3-phosphate. 5 residues coordinate glycerol: arginine 82, glutamate 83, tyrosine 135, aspartate 244, and glutamine 245. Residues threonine 266, glycine 309, glycine 409, and asparagine 413 each contribute to the ADP site. The ATP site is built by threonine 266, glycine 309, and glycine 409.

The protein belongs to the FGGY kinase family.

The catalysed reaction is glycerol + ATP = sn-glycerol 3-phosphate + ADP + H(+). It functions in the pathway polyol metabolism; glycerol degradation via glycerol kinase pathway; sn-glycerol 3-phosphate from glycerol: step 1/1. With respect to regulation, inhibited by fructose 1,6-bisphosphate (FBP). Key enzyme in the regulation of glycerol uptake and metabolism. Catalyzes the phosphorylation of glycerol to yield sn-glycerol 3-phosphate. The chain is Glycerol kinase from Coxiella burnetii (strain RSA 331 / Henzerling II).